We begin with the raw amino-acid sequence, 380 residues long: Chaperone protein DnaJ (380 aa).

Residues 4–69 (DYYEILGVTR…QKRAAYDRFG (66 aa)) enclose the J domain. A CR-type zinc finger spans residues 135–213 (GKTAQINIPS…CQGTRRVEKN (79 aa)). Cysteine 148, cysteine 151, cysteine 165, cysteine 168, cysteine 187, cysteine 190, cysteine 201, and cysteine 204 together coordinate Zn(2+). CXXCXGXG motif repeat units lie at residues 148–155 (CDSCEGSG), 165–172 (CGTCHGAG), 187–194 (CHACNGRG), and 201–208 (CPKCQGTR).

Belongs to the DnaJ family. Homodimer. It depends on Zn(2+) as a cofactor.

It localises to the cytoplasm. In terms of biological role, participates actively in the response to hyperosmotic and heat shock by preventing the aggregation of stress-denatured proteins and by disaggregating proteins, also in an autonomous, DnaK-independent fashion. Unfolded proteins bind initially to DnaJ; upon interaction with the DnaJ-bound protein, DnaK hydrolyzes its bound ATP, resulting in the formation of a stable complex. GrpE releases ADP from DnaK; ATP binding to DnaK triggers the release of the substrate protein, thus completing the reaction cycle. Several rounds of ATP-dependent interactions between DnaJ, DnaK and GrpE are required for fully efficient folding. Also involved, together with DnaK and GrpE, in the DNA replication of plasmids through activation of initiation proteins. The protein is Chaperone protein DnaJ of Bartonella quintana (strain Toulouse) (Rochalimaea quintana).